The sequence spans 352 residues: Biotin synthase (352 aa).

Positions 44-262 (NRVQVSTLLS…LAVARILMPK (219 aa)) constitute a Radical SAM core domain. [4Fe-4S] cluster-binding residues include Cys-59, Cys-63, and Cys-66. [2Fe-2S] cluster-binding residues include Cys-103, Cys-134, Cys-194, and Arg-266.

This sequence belongs to the radical SAM superfamily. Biotin synthase family. Homodimer. The cofactor is [4Fe-4S] cluster. It depends on [2Fe-2S] cluster as a cofactor.

The enzyme catalyses (4R,5S)-dethiobiotin + (sulfur carrier)-SH + 2 reduced [2Fe-2S]-[ferredoxin] + 2 S-adenosyl-L-methionine = (sulfur carrier)-H + biotin + 2 5'-deoxyadenosine + 2 L-methionine + 2 oxidized [2Fe-2S]-[ferredoxin]. Its pathway is cofactor biosynthesis; biotin biosynthesis; biotin from 7,8-diaminononanoate: step 2/2. Functionally, catalyzes the conversion of dethiobiotin (DTB) to biotin by the insertion of a sulfur atom into dethiobiotin via a radical-based mechanism. This is Biotin synthase from Pseudomonas putida (strain ATCC 47054 / DSM 6125 / CFBP 8728 / NCIMB 11950 / KT2440).